The primary structure comprises 122 residues: Small ribosomal subunit protein uS13 (122 aa).

A disordered region spans residues 93–122 (RRGLPVRGQRTKTNARTRKGPKKTIAGKKK).

Belongs to the universal ribosomal protein uS13 family. In terms of assembly, part of the 30S ribosomal subunit. Forms a loose heterodimer with protein S19. Forms two bridges to the 50S subunit in the 70S ribosome.

In terms of biological role, located at the top of the head of the 30S subunit, it contacts several helices of the 16S rRNA. In the 70S ribosome it contacts the 23S rRNA (bridge B1a) and protein L5 of the 50S subunit (bridge B1b), connecting the 2 subunits; these bridges are implicated in subunit movement. Contacts the tRNAs in the A and P-sites. This is Small ribosomal subunit protein uS13 from Corynebacterium kroppenstedtii (strain DSM 44385 / JCM 11950 / CIP 105744 / CCUG 35717).